We begin with the raw amino-acid sequence, 114 residues long: Hemerythrin subunit 1 (114 aa).

7 residues coordinate Fe cation: H26, H55, E59, H74, H78, H102, and D107.

The protein belongs to the hemerythrin family.

In terms of biological role, hemerythrin is a respiratory protein in blood cells of certain marine worms. The oxygen-binding site in each chain contains two iron atoms. This Golfingia vulgaris (Marine worm) protein is Hemerythrin subunit 1.